A 294-amino-acid polypeptide reads, in one-letter code: 4-hydroxy-tetrahydrodipicolinate synthase (294 aa).

Threonine 47 lines the pyruvate pocket. Catalysis depends on tyrosine 136, which acts as the Proton donor/acceptor. The active-site Schiff-base intermediate with substrate is lysine 164. A pyruvate-binding site is contributed by valine 206.

Belongs to the DapA family. In terms of assembly, homotetramer; dimer of dimers.

It localises to the cytoplasm. The catalysed reaction is L-aspartate 4-semialdehyde + pyruvate = (2S,4S)-4-hydroxy-2,3,4,5-tetrahydrodipicolinate + H2O + H(+). Its pathway is amino-acid biosynthesis; L-lysine biosynthesis via DAP pathway; (S)-tetrahydrodipicolinate from L-aspartate: step 3/4. In terms of biological role, catalyzes the condensation of (S)-aspartate-beta-semialdehyde [(S)-ASA] and pyruvate to 4-hydroxy-tetrahydrodipicolinate (HTPA). The polypeptide is 4-hydroxy-tetrahydrodipicolinate synthase (Nostoc punctiforme (strain ATCC 29133 / PCC 73102)).